Reading from the N-terminus, the 162-residue chain is UPF0114 protein PST_0950 (162 aa).

3 consecutive transmembrane segments (helical) span residues leucine 15 to phenylalanine 35, leucine 53 to valine 73, and leucine 136 to methionine 156.

This sequence belongs to the UPF0114 family.

Its subcellular location is the cell membrane. This is UPF0114 protein PST_0950 from Stutzerimonas stutzeri (strain A1501) (Pseudomonas stutzeri).